The chain runs to 325 residues: RepFIB replication protein A (325 aa).

Residues 279–298 are disordered; the sequence is APNDESKENPLPPSPAEKVS.

Belongs to the initiator RepB protein family.

Functionally, this protein is essential for plasmid replication; it is involved in copy control functions. In vitro, binds to the DNA repeat units, BCDD'D'', EFG and HIJ. The chain is RepFIB replication protein A (repA) from Escherichia coli.